A 383-amino-acid chain; its full sequence is Chaperone protein DnaJ (383 aa).

The J domain maps to 6 to 70 (DYYDVLGVGR…QKRAAYDQYG (65 aa)). The CR-type zinc-finger motif lies at 140–222 (GKETKISYSR…CHGTGREEER (83 aa)). Residues Cys153, Cys156, Cys170, Cys173, Cys196, Cys199, Cys210, and Cys213 each contribute to the Zn(2+) site. CXXCXGXG motif repeat units lie at residues 153 to 160 (CHTCHGSG), 170 to 177 (CHKCHGAG), 196 to 203 (CDVCGGTG), and 210 to 217 (CDTCHGTG).

The protein belongs to the DnaJ family. As to quaternary structure, homodimer. Requires Zn(2+) as cofactor.

Its subcellular location is the cytoplasm. In terms of biological role, participates actively in the response to hyperosmotic and heat shock by preventing the aggregation of stress-denatured proteins and by disaggregating proteins, also in an autonomous, DnaK-independent fashion. Unfolded proteins bind initially to DnaJ; upon interaction with the DnaJ-bound protein, DnaK hydrolyzes its bound ATP, resulting in the formation of a stable complex. GrpE releases ADP from DnaK; ATP binding to DnaK triggers the release of the substrate protein, thus completing the reaction cycle. Several rounds of ATP-dependent interactions between DnaJ, DnaK and GrpE are required for fully efficient folding. Also involved, together with DnaK and GrpE, in the DNA replication of plasmids through activation of initiation proteins. The protein is Chaperone protein DnaJ of Latilactobacillus sakei subsp. sakei (strain 23K) (Lactobacillus sakei subsp. sakei).